The sequence spans 178 residues: Probable chorismate pyruvate-lyase (178 aa).

Positions 37, 78, 114, and 165 each coordinate substrate.

It belongs to the UbiC family.

Its subcellular location is the cytoplasm. The catalysed reaction is chorismate = 4-hydroxybenzoate + pyruvate. The protein operates within cofactor biosynthesis; ubiquinone biosynthesis. Its function is as follows. Removes the pyruvyl group from chorismate, with concomitant aromatization of the ring, to provide 4-hydroxybenzoate (4HB) for the ubiquinone pathway. The polypeptide is Probable chorismate pyruvate-lyase (Aeromonas salmonicida (strain A449)).